We begin with the raw amino-acid sequence, 626 residues long: Endo-1,3(4)-beta-glucanase xgeA (626 aa).

The N-terminal stretch at 1–25 is a signal peptide; sequence MSSSLMRRVGSLAASAIIFPGIAHA. In terms of domain architecture, GH16 spans 33–286; sequence ESWEGEKILN…WAGGVFGDSG (254 aa). N-linked (GlcNAc...) asparagine glycosylation occurs at N61. E142 functions as the Nucleophile in the catalytic mechanism. E147 functions as the Proton donor in the catalytic mechanism. Residues 477–494 are compositionally biased toward low complexity; the sequence is ASTDAAAATTPAAEPHPS. The segment at 477-533 is disordered; it reads ASTDAAAATTPAAEPHPSNAETPADSKSSADAVTAQATKTTIAVNTPNPATDSASSV. Residues 495–533 show a composition bias toward polar residues; the sequence is NAETPADSKSSADAVTAQATKTTIAVNTPNPATDSASSV. A lipid anchor (GPI-anchor amidated glycine) is attached at G603. The propeptide at 604-626 is removed in mature form; the sequence is VGSKVSISASVAIAAFVMLLLVN.

The protein belongs to the glycosyl hydrolase 16 family.

Its subcellular location is the cell membrane. It catalyses the reaction Endohydrolysis of (1-&gt;3)- or (1-&gt;4)-linkages in beta-D-glucans when the glucose residue whose reducing group is involved in the linkage to be hydrolyzed is itself substituted at C-3.. In terms of biological role, mixed-linked glucanase involved in the degradation of complex natural cellulosic substrates. Active on laminarin. lichenan, soluble carboxymethyl cellulose but not on pustulan. In Emericella nidulans (strain FGSC A4 / ATCC 38163 / CBS 112.46 / NRRL 194 / M139) (Aspergillus nidulans), this protein is Endo-1,3(4)-beta-glucanase xgeA (xgeA).